The chain runs to 217 residues: 3,4-dihydroxy-2-butanone 4-phosphate synthase (217 aa).

D-ribulose 5-phosphate is bound by residues 37–38 (RE), aspartate 42, 150–154 (RRGHT), and glutamate 174. Mg(2+) is bound at residue glutamate 38. Histidine 153 lines the Mg(2+) pocket.

It belongs to the DHBP synthase family. Homodimer. The cofactor is Mg(2+). Requires Mn(2+) as cofactor.

The enzyme catalyses D-ribulose 5-phosphate = (2S)-2-hydroxy-3-oxobutyl phosphate + formate + H(+). It participates in cofactor biosynthesis; riboflavin biosynthesis; 2-hydroxy-3-oxobutyl phosphate from D-ribulose 5-phosphate: step 1/1. In terms of biological role, catalyzes the conversion of D-ribulose 5-phosphate to formate and 3,4-dihydroxy-2-butanone 4-phosphate. The sequence is that of 3,4-dihydroxy-2-butanone 4-phosphate synthase from Yersinia pseudotuberculosis serotype O:1b (strain IP 31758).